Consider the following 318-residue polypeptide: Small ribosomal subunit protein uS3 (318 aa).

One can recognise a KH type-2 domain in the interval 17-86 (MDEYFAEQLS…NPQIDAQEVK (70 aa)). A compositionally biased stretch (basic and acidic residues) spans 198–229 (SVEVEEPAEKPAEKPAEKPAEKAAAPKKEAAK). Positions 198–275 (SVEVEEPAEK…VQAETSEEIE (78 aa)) are disordered. Pro residues predominate over residues 234-250 (APAPEAPAPAPEAPAPA). Over residues 253–275 (EEAEVAEPEEAEEVQAETSEEIE) the composition is skewed to acidic residues.

The protein belongs to the universal ribosomal protein uS3 family. Part of the 30S ribosomal subunit.

Functionally, binds the lower part of the 30S subunit head. This Methanosarcina acetivorans (strain ATCC 35395 / DSM 2834 / JCM 12185 / C2A) protein is Small ribosomal subunit protein uS3.